A 65-amino-acid polypeptide reads, in one-letter code: Dybowskin-2CDYa (65 aa).

The first 22 residues, 1–22 (MFTLKKSLLLLFFIGVIKLSLC), serve as a signal peptide directing secretion. Residues 23 to 47 (EEERNADDDERRDDPDEMDVEVENR) constitute a propeptide that is removed on maturation. Acidic residues predominate over residues 26–43 (RNADDDERRDDPDEMDVE). Positions 26–65 (RNADDDERRDDPDEMDVEVENRSAVGRHGRRFGLRKHRKH) are disordered. A compositionally biased stretch (basic residues) spans 50 to 65 (VGRHGRRFGLRKHRKH).

It belongs to the frog skin active peptide (FSAP) family. Brevinin subfamily. In terms of tissue distribution, expressed by the skin glands.

The protein resides in the secreted. Its function is as follows. Antimicrobial peptide. Has activity against the Gram-positive bacterium S.aureus (MIC=6 uM) and the Gram-negative bacterium E.coli (MIC=3 uM). Lacks hemolytic activity against human erythrocytes. The protein is Dybowskin-2CDYa of Rana dybowskii (Dybovsky's frog).